Reading from the N-terminus, the 103-residue chain is Small ribosomal subunit protein uS10 (103 aa).

It belongs to the universal ribosomal protein uS10 family. Part of the 30S ribosomal subunit.

Functionally, involved in the binding of tRNA to the ribosomes. This Mycoplasmopsis pulmonis (strain UAB CTIP) (Mycoplasma pulmonis) protein is Small ribosomal subunit protein uS10.